The primary structure comprises 224 residues: Uracil phosphoribosyltransferase (224 aa).

38–42 provides a ligand contact to GTP; sequence KGLVK. 5-phospho-alpha-D-ribose 1-diphosphate contacts are provided by residues Arg-87, Arg-112, and 140-148; that span reads DPMIATGST. Uracil is bound by residues Ile-204 and 209–211; that span reads GDA. Asp-210 is a 5-phospho-alpha-D-ribose 1-diphosphate binding site.

This sequence belongs to the UPRTase family. The cofactor is Mg(2+).

It carries out the reaction UMP + diphosphate = 5-phospho-alpha-D-ribose 1-diphosphate + uracil. The protein operates within pyrimidine metabolism; UMP biosynthesis via salvage pathway; UMP from uracil: step 1/1. With respect to regulation, allosterically activated by GTP. Functionally, catalyzes the conversion of uracil and 5-phospho-alpha-D-ribose 1-diphosphate (PRPP) to UMP and diphosphate. The polypeptide is Uracil phosphoribosyltransferase (Thermococcus gammatolerans (strain DSM 15229 / JCM 11827 / EJ3)).